The chain runs to 488 residues: DNA polymerase II small subunit (488 aa).

The protein belongs to the DNA polymerase delta/II small subunit family. Heterodimer of a large subunit and a small subunit.

The enzyme catalyses DNA(n) + a 2'-deoxyribonucleoside 5'-triphosphate = DNA(n+1) + diphosphate. It catalyses the reaction Exonucleolytic cleavage in the 3'- to 5'-direction to yield nucleoside 5'-phosphates.. Functionally, possesses two activities: a DNA synthesis (polymerase) and an exonucleolytic activity that degrades single-stranded DNA in the 3' to 5' direction. Has a template-primer preference which is characteristic of a replicative DNA polymerase. The polypeptide is DNA polymerase II small subunit (polB) (Archaeoglobus fulgidus (strain ATCC 49558 / DSM 4304 / JCM 9628 / NBRC 100126 / VC-16)).